A 323-amino-acid chain; its full sequence is GTP 3',8-cyclase (323 aa).

Residues lysine 4–glutamate 233 enclose the Radical SAM core domain. Arginine 13 is a GTP binding site. Cysteine 20 and cysteine 24 together coordinate [4Fe-4S] cluster. Tyrosine 26 is a binding site for S-adenosyl-L-methionine. Cysteine 27 serves as a coordination point for [4Fe-4S] cluster. GTP is bound at residue arginine 63. S-adenosyl-L-methionine is bound at residue glycine 67. Residue threonine 94 coordinates GTP. Serine 118 serves as a coordination point for S-adenosyl-L-methionine. Lysine 154 contributes to the GTP binding site. Methionine 188 serves as a coordination point for S-adenosyl-L-methionine. [4Fe-4S] cluster-binding residues include cysteine 250 and cysteine 253. Arginine 255–arginine 257 is a binding site for GTP. Residue cysteine 267 participates in [4Fe-4S] cluster binding.

Belongs to the radical SAM superfamily. MoaA family. Monomer and homodimer. Requires [4Fe-4S] cluster as cofactor.

The catalysed reaction is GTP + AH2 + S-adenosyl-L-methionine = (8S)-3',8-cyclo-7,8-dihydroguanosine 5'-triphosphate + 5'-deoxyadenosine + L-methionine + A + H(+). It participates in cofactor biosynthesis; molybdopterin biosynthesis. Functionally, catalyzes the cyclization of GTP to (8S)-3',8-cyclo-7,8-dihydroguanosine 5'-triphosphate. This Clostridium perfringens (strain SM101 / Type A) protein is GTP 3',8-cyclase.